Reading from the N-terminus, the 350-residue chain is Small-conductance mechanosensitive channel MscMJ (350 aa).

5 helical membrane passes run Ile10–Val30, Leu59–Leu79, Val91–Phe111, Ile130–Ala150, and Val154–Leu174.

The protein belongs to the MscS (TC 1.A.23) family.

It localises to the cell membrane. Small-conductance mechanosensitive channel that opens in response to stretch forces in the membrane lipid bilayer. Exhibits a sixfold preference for cations over anions. Non-rectifying. The sequence is that of Small-conductance mechanosensitive channel MscMJ from Methanocaldococcus jannaschii (strain ATCC 43067 / DSM 2661 / JAL-1 / JCM 10045 / NBRC 100440) (Methanococcus jannaschii).